Here is a 326-residue protein sequence, read N- to C-terminus: Interleukin-1-binding protein (326 aa).

Residues 1–18 (MSIPPVIFLPIFFYSSFV) form the signal peptide. 3 consecutive Ig-like C2-type domains span residues 24 to 115 (PECI…LNLT), 122 to 208 (SNID…YDVT), and 221 to 322 (PPTM…KTVT). Cys48 and Cys99 are disulfide-bonded. N-linked (GlcNAc...) asparagine; by host glycosylation is found at Asn80, Asn103, and Asn113. Cys143 and Cys194 form a disulfide bridge. Asn237 carries an N-linked (GlcNAc...) asparagine; by host glycan. An intrachain disulfide couples Cys242 to Cys309.

Belongs to the interleukin-1 receptor family. As to quaternary structure, interacts with mouse Il1b.

It is found in the secreted. Its function is as follows. May reduce the host inflammatory response by interacting with inteleukin-1 beta (Il1b) and thus decreasing the association between IL1B and its cellular receptor. This is Interleukin-1-binding protein (OPG201) from Bos taurus (Bovine).